Consider the following 218-residue polypeptide: N-(5'-phosphoribosyl)anthranilate isomerase (218 aa).

It belongs to the TrpF family.

It carries out the reaction N-(5-phospho-beta-D-ribosyl)anthranilate = 1-(2-carboxyphenylamino)-1-deoxy-D-ribulose 5-phosphate. It functions in the pathway amino-acid biosynthesis; L-tryptophan biosynthesis; L-tryptophan from chorismate: step 3/5. The protein is N-(5'-phosphoribosyl)anthranilate isomerase of Rhodopseudomonas palustris (strain BisB5).